The chain runs to 336 residues: Tetraacyldisaccharide 4'-kinase (336 aa).

60–67 (TVGGTGKT) is an ATP binding site.

It belongs to the LpxK family.

The enzyme catalyses a lipid A disaccharide + ATP = a lipid IVA + ADP + H(+). The protein operates within glycolipid biosynthesis; lipid IV(A) biosynthesis; lipid IV(A) from (3R)-3-hydroxytetradecanoyl-[acyl-carrier-protein] and UDP-N-acetyl-alpha-D-glucosamine: step 6/6. Transfers the gamma-phosphate of ATP to the 4'-position of a tetraacyldisaccharide 1-phosphate intermediate (termed DS-1-P) to form tetraacyldisaccharide 1,4'-bis-phosphate (lipid IVA). This is Tetraacyldisaccharide 4'-kinase from Pseudomonas fluorescens (strain ATCC BAA-477 / NRRL B-23932 / Pf-5).